The primary structure comprises 362 residues: Heat-inducible transcription repressor HrcA (362 aa).

This sequence belongs to the HrcA family.

Its function is as follows. Negative regulator of class I heat shock genes (grpE-dnaK-dnaJ and groELS operons). Prevents heat-shock induction of these operons. This is Heat-inducible transcription repressor HrcA from Bradyrhizobium diazoefficiens (strain JCM 10833 / BCRC 13528 / IAM 13628 / NBRC 14792 / USDA 110).